The following is a 187-amino-acid chain: Large ribosomal subunit protein uL5 (187 aa).

This sequence belongs to the universal ribosomal protein uL5 family. As to quaternary structure, part of the 50S ribosomal subunit; part of the 5S rRNA/L5/L18/L25 subcomplex. Contacts the 5S rRNA and the P site tRNA. Forms a bridge to the 30S subunit in the 70S ribosome.

Functionally, this is one of the proteins that bind and probably mediate the attachment of the 5S RNA into the large ribosomal subunit, where it forms part of the central protuberance. In the 70S ribosome it contacts protein S13 of the 30S subunit (bridge B1b), connecting the 2 subunits; this bridge is implicated in subunit movement. Contacts the P site tRNA; the 5S rRNA and some of its associated proteins might help stabilize positioning of ribosome-bound tRNAs. The protein is Large ribosomal subunit protein uL5 of Malacoplasma penetrans (strain HF-2) (Mycoplasma penetrans).